A 271-amino-acid chain; its full sequence is Eukaryotic translation initiation factor 3 subunit G (271 aa).

3 disordered regions span residues 1–26 (MSTT…TNPD), 63–119 (AQRK…AQKL), and 147–187 (TTSS…RDDS). A Phosphoserine modification is found at S77. In terms of domain architecture, RRM spans 188-267 (TTLKVSQLNS…LILHLEWSKK (80 aa)).

The protein belongs to the eIF-3 subunit G family. As to quaternary structure, component of the eukaryotic translation initiation factor 3 (eIF-3) complex.

The protein resides in the cytoplasm. In terms of biological role, RNA-binding component of the eukaryotic translation initiation factor 3 (eIF-3) complex, which is involved in protein synthesis of a specialized repertoire of mRNAs and, together with other initiation factors, stimulates binding of mRNA and methionyl-tRNAi to the 40S ribosome. The eIF-3 complex specifically targets and initiates translation of a subset of mRNAs involved in cell proliferation. This subunit can bind 18S rRNA. In Scheffersomyces stipitis (strain ATCC 58785 / CBS 6054 / NBRC 10063 / NRRL Y-11545) (Yeast), this protein is Eukaryotic translation initiation factor 3 subunit G.